Here is a 593-residue protein sequence, read N- to C-terminus: Proteasome-associated ATPase (593 aa).

Positions 23-95 (LLSQISYLEE…LKEEVDRLGQ (73 aa)) form a coiled coil. 282-287 (GCGKTL) is a binding site for ATP. Residues 592–593 (YL) form a docks into pockets in the proteasome alpha-ring region.

Belongs to the AAA ATPase family. As to quaternary structure, homohexamer. Assembles into a hexameric ring structure that caps the 20S proteasome core. Strongly interacts with the prokaryotic ubiquitin-like protein Pup through a hydrophobic interface; the interacting region of ARC lies in its N-terminal coiled-coil domain. There is one Pup binding site per ARC hexamer ring. Upon ATP-binding, the C-terminus of ARC interacts with the alpha-rings of the proteasome core, possibly by binding to the intersubunit pockets.

The protein operates within protein degradation; proteasomal Pup-dependent pathway. ATPase which is responsible for recognizing, binding, unfolding and translocation of pupylated proteins into the bacterial 20S proteasome core particle. May be essential for opening the gate of the 20S proteasome via an interaction with its C-terminus, thereby allowing substrate entry and access to the site of proteolysis. Thus, the C-termini of the proteasomal ATPase may function like a 'key in a lock' to induce gate opening and therefore regulate proteolysis. The protein is Proteasome-associated ATPase of Geodermatophilus obscurus (strain ATCC 25078 / DSM 43160 / JCM 3152 / CCUG 61914 / KCC A-0152 / KCTC 9177 / NBRC 13315 / NRRL B-3577 / G-20).